A 251-amino-acid chain; its full sequence is 3-dehydroquinate dehydratase (251 aa).

3-dehydroquinate is bound by residues 47–49 and R83; that span reads EWR. The active-site Proton donor/acceptor is H144. K171 (schiff-base intermediate with substrate) is an active-site residue. 3-dehydroquinate-binding residues include R214, S233, and Q237.

Belongs to the type-I 3-dehydroquinase family. As to quaternary structure, homodimer.

It catalyses the reaction 3-dehydroquinate = 3-dehydroshikimate + H2O. The protein operates within metabolic intermediate biosynthesis; chorismate biosynthesis; chorismate from D-erythrose 4-phosphate and phosphoenolpyruvate: step 3/7. Functionally, involved in the third step of the chorismate pathway, which leads to the biosynthesis of aromatic amino acids. Catalyzes the cis-dehydration of 3-dehydroquinate (DHQ) and introduces the first double bond of the aromatic ring to yield 3-dehydroshikimate. This Klebsiella pneumoniae (strain 342) protein is 3-dehydroquinate dehydratase.